The sequence spans 329 residues: GTP 3',8-cyclase (329 aa).

In terms of domain architecture, Radical SAM core spans 8 to 234 (AFARKFYYLR…QLRQRSDGPA (227 aa)). Position 17 (R17) interacts with GTP. C24 and C28 together coordinate [4Fe-4S] cluster. Y30 is an S-adenosyl-L-methionine binding site. [4Fe-4S] cluster is bound at residue C31. Position 68 (R68) interacts with GTP. G72 lines the S-adenosyl-L-methionine pocket. T99 serves as a coordination point for GTP. Residue S123 coordinates S-adenosyl-L-methionine. A GTP-binding site is contributed by K160. M194 contributes to the S-adenosyl-L-methionine binding site. C257 and C260 together coordinate [4Fe-4S] cluster. 262-264 (RLR) contributes to the GTP binding site. C274 serves as a coordination point for [4Fe-4S] cluster.

The protein belongs to the radical SAM superfamily. MoaA family. Monomer and homodimer. [4Fe-4S] cluster serves as cofactor.

It catalyses the reaction GTP + AH2 + S-adenosyl-L-methionine = (8S)-3',8-cyclo-7,8-dihydroguanosine 5'-triphosphate + 5'-deoxyadenosine + L-methionine + A + H(+). Its pathway is cofactor biosynthesis; molybdopterin biosynthesis. Catalyzes the cyclization of GTP to (8S)-3',8-cyclo-7,8-dihydroguanosine 5'-triphosphate. The sequence is that of GTP 3',8-cyclase from Shigella dysenteriae serotype 1 (strain Sd197).